The following is a 515-amino-acid chain: E3 ubiquitin-protein ligase RNF217 (515 aa).

Disordered stretches follow at residues 1–125 (MGEE…VLAQ) and 147–189 (PEAP…ADPL). Residues 10–22 (GSGGARASGGGSA) are compositionally biased toward gly residues. 2 stretches are compositionally biased toward low complexity: residues 39–49 (GPRAAASSSRP) and 147–157 (PEAPSAESPSP). The span at 158 to 178 (SESPPQAPLGPIPASPPPSFP) shows a compositional bias: pro residues. Residues 179–189 (SSPLSLPADPL) are compositionally biased toward low complexity. The interval 232–451 (MVLMCRVCLE…LSIFGCKYRY (220 aa)) is TRIAD supradomain. C236, C239, C256, C259, C356, C359, H364, C369, C396, and C399 together coordinate Zn(2+). The RING-type 1 zinc finger occupies 236–282 (CRVCLEDKPIKPLPCCKKAVCEECLKIYLSSQVQLGQVEIKCPVTEC). The IBR-type zinc finger occupies 301 to 369 (IKYKYFLELG…HSPWHEGVNC (69 aa)). The RING-type 2; atypical zinc-finger motif lies at 396–425 (CPKCKIHIQRTEGCDHMTCSQCNTNFCYRC). C409 is an active-site residue. Residues C414, C417, C422, C425, H438, and C447 each contribute to the Zn(2+) site. The helical transmembrane segment at 476–496 (LILVLGLALGAIAVVIGLFVF) threads the bilayer.

Belongs to the RBR family. RNF217 subfamily. In terms of assembly, interacts with HAX1.

It localises to the membrane. The protein resides in the cytoplasm. It carries out the reaction [E2 ubiquitin-conjugating enzyme]-S-ubiquitinyl-L-cysteine + [acceptor protein]-L-lysine = [E2 ubiquitin-conjugating enzyme]-L-cysteine + [acceptor protein]-N(6)-ubiquitinyl-L-lysine.. Its pathway is protein modification; protein ubiquitination. Its function is as follows. E3 ubiquitin-protein ligase which accepts ubiquitin from E2 ubiquitin-conjugating enzymes in the form of a thioester and then directly transfers the ubiquitin to targeted substrates. Mediates the degradation of the iron exporter ferroportin/SLC40A1 and thus regulates iron homeostasis. This chain is E3 ubiquitin-protein ligase RNF217 (Rnf217), found in Mus musculus (Mouse).